The primary structure comprises 269 residues: Tropinone reductase homolog At2g29320 (269 aa).

Position 19-43 (19-43 (LVTGAASGIGYAIVEELAGFGAKIH)) interacts with NADP(+). Ser-152 provides a ligand contact to substrate. Tyr-166 serves as the catalytic Proton acceptor.

It belongs to the short-chain dehydrogenases/reductases (SDR) family. SDR65C subfamily.

This Arabidopsis thaliana (Mouse-ear cress) protein is Tropinone reductase homolog At2g29320.